The primary structure comprises 136 residues: Large-conductance mechanosensitive channel (136 aa).

At 1-16 (MGLLSEFKAFAVKGNV) the chain is on the cytoplasmic side. Residues 17–45 (VDMAVGIIIGAAFGKIVSSFVGDVIMPPI) traverse the membrane as a helical segment. The Extracellular segment spans residues 46–73 (GLLIGGVDFSDLAITLKAEGDVPAVVLA). The helical transmembrane segment at 74–93 (YRKFIQTVLNFVIVAFAIFM) threads the bilayer. Topologically, residues 94 to 136 (GVKAINRLKREEAVAPSEPPVPSAEETLLTEIRDLLKAQQNKS) are cytoplasmic.

The protein belongs to the MscL family. Homopentamer.

The protein localises to the cell inner membrane. Channel that opens in response to stretch forces in the membrane lipid bilayer. Forms a nonselective ion channel with a conductance of about 4 nanosiemens. May participate in the regulation of osmotic pressure changes within the cell. This is Large-conductance mechanosensitive channel from Pseudomonas fluorescens.